We begin with the raw amino-acid sequence, 480 residues long: Protein nucleotidyltransferase YdiU (480 aa).

8 residues coordinate ATP: G84, G86, R87, K107, D119, G120, R170, and R177. Catalysis depends on D246, which acts as the Proton acceptor. Positions 247 and 256 each coordinate Mg(2+). Residue D256 participates in ATP binding.

The protein belongs to the SELO family. It depends on Mg(2+) as a cofactor. Mn(2+) serves as cofactor.

The catalysed reaction is L-seryl-[protein] + ATP = 3-O-(5'-adenylyl)-L-seryl-[protein] + diphosphate. It carries out the reaction L-threonyl-[protein] + ATP = 3-O-(5'-adenylyl)-L-threonyl-[protein] + diphosphate. The enzyme catalyses L-tyrosyl-[protein] + ATP = O-(5'-adenylyl)-L-tyrosyl-[protein] + diphosphate. It catalyses the reaction L-histidyl-[protein] + UTP = N(tele)-(5'-uridylyl)-L-histidyl-[protein] + diphosphate. The catalysed reaction is L-seryl-[protein] + UTP = O-(5'-uridylyl)-L-seryl-[protein] + diphosphate. It carries out the reaction L-tyrosyl-[protein] + UTP = O-(5'-uridylyl)-L-tyrosyl-[protein] + diphosphate. Its function is as follows. Nucleotidyltransferase involved in the post-translational modification of proteins. It can catalyze the addition of adenosine monophosphate (AMP) or uridine monophosphate (UMP) to a protein, resulting in modifications known as AMPylation and UMPylation. The chain is Protein nucleotidyltransferase YdiU from Pseudoalteromonas atlantica (strain T6c / ATCC BAA-1087).